The following is a 49-amino-acid chain: Large ribosomal subunit protein bL33 (49 aa).

Belongs to the bacterial ribosomal protein bL33 family.

This Lachnoclostridium phytofermentans (strain ATCC 700394 / DSM 18823 / ISDg) (Clostridium phytofermentans) protein is Large ribosomal subunit protein bL33.